The primary structure comprises 260 residues: Tropinone reductase 2 (260 aa).

18 to 41 (SRGIGYGIVEELASLGASVYTCSR) is an NADP(+) binding site. Residue S146 participates in substrate binding. The active-site Proton acceptor is Y159. 192 to 196 (IATSL) is an NADP(+) binding site.

The protein belongs to the short-chain dehydrogenases/reductases (SDR) family. In terms of assembly, homodimer.

It catalyses the reaction pseudotropine + NADP(+) = tropinone + NADPH + H(+). It participates in alkaloid biosynthesis; tropane alkaloid biosynthesis. Its function is as follows. Catalyzes the stereospecific reduction of tropinone to pseudotropine. In Datura stramonium (Jimsonweed), this protein is Tropinone reductase 2 (TR2).